Reading from the N-terminus, the 287-residue chain is MAIKFENVSYVYSPGSPLEAIGLDQLNFSLEEGKFIALVGHTGSGKSTLMQHFNALLKPTSGKIEIAGYTITPETGNKGLKDLRRKVSLAFQFSEAQLFENTVLKDVEYGPRNFGFSEDEAREAALKWLKKVGLKDDLIEHSPFDLSGGQMRRVALAGVLAYEPEIICLDEPAAGLDPMGRLEMMQLFKDYQAAGHTVILVTHNMDDVADYADDVLALEHGRLIKHASPKEVFKDSEWLQKHHLAEPRSARFAAKLEAAGLKLPGQPLTMPELADAIKQSLKGGEHE.

The region spanning Ile3 to Ala245 is the ABC transporter domain. ATP is bound at residue Gly40 to Ser47.

This sequence belongs to the ABC transporter superfamily. Energy-coupling factor EcfA family. Forms a stable energy-coupling factor (ECF) transporter complex composed of 2 membrane-embedded substrate-binding proteins (S component), 2 ATP-binding proteins (A component) and 2 transmembrane proteins (T component).

The protein localises to the cell membrane. Functionally, ATP-binding (A) component of a common energy-coupling factor (ECF) ABC-transporter complex. Unlike classic ABC transporters this ECF transporter provides the energy necessary to transport a number of different substrates. The polypeptide is Energy-coupling factor transporter ATP-binding protein EcfA2 (Lactobacillus delbrueckii subsp. bulgaricus (strain ATCC 11842 / DSM 20081 / BCRC 10696 / JCM 1002 / NBRC 13953 / NCIMB 11778 / NCTC 12712 / WDCM 00102 / Lb 14)).